A 218-amino-acid polypeptide reads, in one-letter code: Uridine kinase (218 aa).

16 to 23 (GGSGSGKT) serves as a coordination point for ATP.

It belongs to the uridine kinase family.

It localises to the cytoplasm. It carries out the reaction uridine + ATP = UMP + ADP + H(+). It catalyses the reaction cytidine + ATP = CMP + ADP + H(+). The protein operates within pyrimidine metabolism; CTP biosynthesis via salvage pathway; CTP from cytidine: step 1/3. Its pathway is pyrimidine metabolism; UMP biosynthesis via salvage pathway; UMP from uridine: step 1/1. The protein is Uridine kinase of Limosilactobacillus reuteri (strain DSM 20016) (Lactobacillus reuteri).